We begin with the raw amino-acid sequence, 127 residues long: Probable glycine cleavage system H protein (127 aa).

The Lipoyl-binding domain maps to 24–106 (TAEVGITAFA…FGDGWMLTVE (83 aa)). Lys-65 is subject to N6-lipoyllysine.

Belongs to the GcvH family. The glycine cleavage system is composed of four proteins: P, T, L and H. (R)-lipoate serves as cofactor.

Functionally, the glycine cleavage system catalyzes the degradation of glycine. The H protein shuttles the methylamine group of glycine from the P protein to the T protein. This is Probable glycine cleavage system H protein from Haloarcula marismortui (strain ATCC 43049 / DSM 3752 / JCM 8966 / VKM B-1809) (Halobacterium marismortui).